Consider the following 310-residue polypeptide: Porphobilinogen deaminase (310 aa).

C242 is subject to S-(dipyrrolylmethanemethyl)cysteine.

This sequence belongs to the HMBS family. In terms of assembly, monomer. Dipyrromethane serves as cofactor.

It catalyses the reaction 4 porphobilinogen + H2O = hydroxymethylbilane + 4 NH4(+). Its pathway is porphyrin-containing compound metabolism; protoporphyrin-IX biosynthesis; coproporphyrinogen-III from 5-aminolevulinate: step 2/4. Functionally, tetrapolymerization of the monopyrrole PBG into the hydroxymethylbilane pre-uroporphyrinogen in several discrete steps. In Shewanella sp. (strain W3-18-1), this protein is Porphobilinogen deaminase.